Reading from the N-terminus, the 366-residue chain is Aminomethyltransferase (366 aa).

This sequence belongs to the GcvT family. The glycine cleavage system is composed of four proteins: P, T, L and H.

It carries out the reaction N(6)-[(R)-S(8)-aminomethyldihydrolipoyl]-L-lysyl-[protein] + (6S)-5,6,7,8-tetrahydrofolate = N(6)-[(R)-dihydrolipoyl]-L-lysyl-[protein] + (6R)-5,10-methylene-5,6,7,8-tetrahydrofolate + NH4(+). In terms of biological role, the glycine cleavage system catalyzes the degradation of glycine. The protein is Aminomethyltransferase of Bacillus cereus (strain ZK / E33L).